The chain runs to 294 residues: ATP synthase gamma chain (294 aa).

The protein belongs to the ATPase gamma chain family. In terms of assembly, F-type ATPases have 2 components, CF(1) - the catalytic core - and CF(0) - the membrane proton channel. CF(1) has five subunits: alpha(3), beta(3), gamma(1), delta(1), epsilon(1). CF(0) has three main subunits: a, b and c.

It localises to the cell inner membrane. Its function is as follows. Produces ATP from ADP in the presence of a proton gradient across the membrane. The gamma chain is believed to be important in regulating ATPase activity and the flow of protons through the CF(0) complex. The chain is ATP synthase gamma chain from Campylobacter jejuni subsp. jejuni serotype O:2 (strain ATCC 700819 / NCTC 11168).